The following is a 209-amino-acid chain: Outer-membrane lipoprotein LolB (209 aa).

Residues methionine 1–alanine 21 form the signal peptide. Cysteine 22 carries the N-palmitoyl cysteine lipid modification. The S-diacylglycerol cysteine moiety is linked to residue cysteine 22.

This sequence belongs to the LolB family. Monomer.

The protein resides in the cell outer membrane. Its function is as follows. Plays a critical role in the incorporation of lipoproteins in the outer membrane after they are released by the LolA protein. This chain is Outer-membrane lipoprotein LolB, found in Haemophilus influenzae (strain 86-028NP).